Here is a 236-residue protein sequence, read N- to C-terminus: MIYAEILAGGKGTRMGNVNMPKQYLPLKGKPIIVHTIEKFILNDRFEKIIIATPKDWINHTQDIIKKYIFDSRVIVIEGGTDRNETIMNGIRYVEKEFGLNEDDIIVTHDAVRPFITHRIIEENIDMALEFGSVDTVIPAVDTIVESTNHDFITDIPVRGNIYQGQTPQSFNMKTIQKHYNNLTDDEKQILTDACKICLLAGEKVKLVNGGISNIKITTPYDLKVANAIVQERINS.

CTP is bound by residues 7-10 (LAGG) and 80-86 (GTDRNET).

This sequence belongs to the IspD/TarI cytidylyltransferase family. TarI subfamily.

It carries out the reaction D-ribitol 5-phosphate + CTP + H(+) = CDP-L-ribitol + diphosphate. The protein operates within cell wall biogenesis; poly(ribitol phosphate) teichoic acid biosynthesis. Its function is as follows. Catalyzes the transfer of the cytidylyl group of CTP to D-ribitol 5-phosphate. The sequence is that of Ribitol-5-phosphate cytidylyltransferase from Listeria monocytogenes serovar 1/2a (strain ATCC BAA-679 / EGD-e).